We begin with the raw amino-acid sequence, 46 residues long: Large ribosomal subunit protein bL36B (46 aa).

This sequence belongs to the bacterial ribosomal protein bL36 family.

The protein is Large ribosomal subunit protein bL36B of Cronobacter sakazakii (strain ATCC BAA-894) (Enterobacter sakazakii).